Reading from the N-terminus, the 284-residue chain is Cell division protein FtsQ (284 aa).

A compositionally biased stretch (basic residues) spans 1–10 (MAFGKSKNRR). A disordered region spans residues 1-23 (MAFGKSKNRRRQDAAQQKEAVRG). The Cytoplasmic segment spans residues 1 to 34 (MAFGKSKNRRRQDAAQQKEAVRGAVRSQGPRALK). The chain crosses the membrane as a helical span at residues 35-52 (VLGLTLGTGLLVWGGAAL). Over 53–284 (REWTLTSPRF…ASERSGASMR (232 aa)) the chain is Periplasmic. The region spanning 62-130 (FELEAVSFSG…NRVSVEVTEH (69 aa)) is the POTRA domain.

This sequence belongs to the FtsQ/DivIB family. FtsQ subfamily.

Its subcellular location is the cell inner membrane. Essential cell division protein. The chain is Cell division protein FtsQ from Myxococcus fulvus (strain ATCC BAA-855 / HW-1).